Here is a 205-residue protein sequence, read N- to C-terminus: Ribonuclease HII (205 aa).

The RNase H type-2 domain occupies 22-205; the sequence is RFICGVDEAG…RKSFLKNILR (184 aa). Residues Asp-28, Glu-29, and Asp-120 each contribute to the a divalent metal cation site.

The protein belongs to the RNase HII family. It depends on Mn(2+) as a cofactor. Requires Mg(2+) as cofactor.

It localises to the cytoplasm. The catalysed reaction is Endonucleolytic cleavage to 5'-phosphomonoester.. Functionally, endonuclease that specifically degrades the RNA of RNA-DNA hybrids. This Caldicellulosiruptor saccharolyticus (strain ATCC 43494 / DSM 8903 / Tp8T 6331) protein is Ribonuclease HII.